Here is a 1147-residue protein sequence, read N- to C-terminus: Nucleolar protein 8 (1147 aa).

The region spanning 8–89 (KRLFVGGLGQ…GTLQIQLAKE (82 aa)) is the RRM domain. A Glycyl lysine isopeptide (Lys-Gly) (interchain with G-Cter in SUMO2) cross-link involves residue Lys-225. Phosphoserine is present on residues Ser-300 and Ser-306. Residue Lys-316 forms a Glycyl lysine isopeptide (Lys-Gly) (interchain with G-Cter in SUMO2) linkage. Tyr-362 is modified (phosphotyrosine). A phosphoserine mark is found at Ser-364 and Ser-365. A Phosphothreonine modification is found at Thr-367. The interval 379 to 401 (KVKNSAESSQPERTVSKKSSFQK) is disordered. Residues 383 to 400 (SAESSQPERTVSKKSSFQ) are compositionally biased toward polar residues. Ser-416 carries the post-translational modification Phosphoserine. Disordered regions lie at residues 427-452 (KFVN…EEYK), 472-511 (AGSH…DLYN), 592-659 (MENG…PLKA), 686-741 (KALE…EDNQ), 766-888 (ANLD…NEDE), 932-963 (KHDH…AEKL), and 986-1017 (SNTD…TLAC). Acidic residues predominate over residues 441–450 (DSEESEEDEE). Polar residues-rich tracts occupy residues 592 to 610 (MENG…TSCQ) and 629 to 650 (TFEN…STNP). Basic and acidic residues-rich tracts occupy residues 700-714 (SLEK…EDPQ) and 732-741 (AKDKQAEDNQ). Ser-704 bears the Phosphoserine mark. Thr-777 is modified (phosphothreonine). Phosphoserine occurs at positions 783 and 787. A compositionally biased stretch (basic and acidic residues) spans 799 to 809 (CPEKELMKESV). 5 positions are modified to phosphoserine: Ser-819, Ser-820, Ser-825, Ser-827, and Ser-872. A compositionally biased stretch (basic and acidic residues) spans 857–883 (SDERFRMDSRFLESDSEDEKKELNEDK). 2 coiled-coil regions span residues 868 to 898 (LESD…KTLN) and 937 to 963 (IYER…AEKL). A compositionally biased stretch (basic and acidic residues) spans 994–1011 (DVPRTEAGAREGTGKIRN). Lys-1038 participates in a covalent cross-link: Glycyl lysine isopeptide (Lys-Gly) (interchain with G-Cter in SUMO2). Residues 1055–1086 (PNDPRFQDSSSEEEDIAEEADHSKPSPGEAVP) form a disordered region. Phosphoserine is present on residues Ser-1063, Ser-1064, Ser-1065, and Ser-1080.

In terms of assembly, interacts with the GTP form of RRAGA, RRAGC and RRAGD. Interacts with NIP7. Interacts with DDX18; the interaction is RNA-dependent. Interacts with DDX47; the interaction is RNA-dependent. Post-translationally, phosphorylated.

The protein resides in the nucleus. It localises to the nucleolus. In terms of biological role, plays an essential role in the survival of diffuse-type gastric cancer cells. Acts as a nucleolar anchoring protein for DDX47. May be involved in regulation of gene expression at the post-transcriptional level or in ribosome biogenesis in cancer cells. This Mus musculus (Mouse) protein is Nucleolar protein 8.